Consider the following 146-residue polypeptide: Snake venom vascular endothelial growth factor toxin TfsvVEGF (146 aa).

The N-terminal stretch at 1–24 is a signal peptide; it reads MAAYLLAVAILFCIQGWPSGTVQG. Q25 carries the post-translational modification Pyrrolidone carboxylic acid. 3 cysteine pairs are disulfide-bonded: C38–C80, C69–C115, and C73–C117. Positions 118–139 are enriched in basic and acidic residues; the sequence is RPRSPGDVNNGKDKRNPEEGGP. The disordered stretch occupies residues 118-146; the sequence is RPRSPGDVNNGKDKRNPEEGGPRARFPFV.

This sequence belongs to the PDGF/VEGF growth factor family. Snake venom VEGF subfamily. Homodimer; disulfide-linked. Interacts with VEGF receptor-1 (FLT1) with a high affinity, whereas it binds to VEGF receptor-2 (KDR) with a low affinity. Does not bind VEGF receptor-3 (FLT4). Expressed by the venom gland.

It is found in the secreted. Functionally, snake venom VEGFs may contribute to venom dispersion and prey subjugation by inducing vascular permeability and hypotension. This protein strongly increases vascular permeability, and weakly stimulates angiogenesis. Interacts with VEGF receptor-1 (FLT1) with a high affinity, whereas it binds to VEGF receptor-2 (KDR) with a low affinity. Stimulates autophosphorylation of VEGF receptor-1 (VEGFR-1/FLT1), and VEGF receptor-2 (VEGFR-2/KDR). The sequence is that of Snake venom vascular endothelial growth factor toxin TfsvVEGF from Protobothrops flavoviridis (Habu).